Here is a 529-residue protein sequence, read N- to C-terminus: Zinc finger protein 490 (529 aa).

The tract at residues 1–53 is disordered; sequence MRRNSSLSFQMERPLEEQVQSKWSSSQGRTGTGGSDVLQMQNSEHHGQSIKTQ. The KRAB domain occupies 57–132; the sequence is ISLEDVAVNF…ALCENKEDCP (76 aa). 13 consecutive C2H2-type zinc fingers follow at residues 156 to 178, 194 to 216, 222 to 244, 250 to 272, 278 to 300, 306 to 328, 334 to 356, 362 to 384, 390 to 412, 418 to 440, 446 to 468, 474 to 496, and 502 to 524; these read CDCSVCGEVFMHQVSLNRHMRSH, HKCKECGKTFTRSSSIRTHERIH, YECKECGKAFAFLFSFRNHIRIH, YECKECGKAFRYLTALRRHEKNH, YKCKQCGKAFIYYQPFLTHERTH, YECKQCGKAFSCPTYLRSHEKTH, FVCRECGRAFFSHSSLRKHVKTH, YTCKKCGEAFKSSSSCEVHERTH, YECKQCGKAFNSSSYLQLHERVH, YECKECGKAFLYSTHFRIHERTH, YECKQCGRVFIYFSHLRRHERSH, CECKQCGKAFTCLNSLKVHKRIH, and FQCRQCGKAFSYSKSLHVHERTH.

This sequence belongs to the krueppel C2H2-type zinc-finger protein family.

The protein resides in the nucleus. Functionally, may be involved in transcriptional regulation. In Homo sapiens (Human), this protein is Zinc finger protein 490 (ZNF490).